The following is a 920-amino-acid chain: Histone-lysine N-methyltransferase, H3 lysine-4 specific (920 aa).

One can recognise an RRM domain in the interval 94–179 (TQVFVSNISP…KPLSVVLDRD (86 aa)). Basic and acidic residues predominate over residues 205-216 (KQRFEREDESSR). 2 disordered regions span residues 205–242 (KQRF…TLSN) and 448–485 (KRVD…YQLN). Polar residues-rich tracts occupy residues 233–242 (PSKNSQTLSN) and 453–462 (SKMNLSAGSK). The segment covering 463–476 (TKSKLQRRRRRRHE) has biased composition (basic residues). Residues 749 to 754 (RVNNRR) carry the RxxxRR motif motif. The SET domain maps to 781–898 (KQLHFGPSRI…HGEELTYDYK (118 aa)). Tyrosine 897 lines the S-adenosyl-L-methionine pocket. The region spanning 904–920 (DKIPCLCGAPTCRGYLN) is the Post-SET domain.

The protein belongs to the class V-like SAM-binding methyltransferase superfamily. Component of the Set1C/COMPASS complex composed of ash2, sdc1, set1, shg1, spp1, swd1, swd2 and swd3.

It is found in the nucleus. It localises to the chromosome. It carries out the reaction L-lysyl(4)-[histone H3] + 3 S-adenosyl-L-methionine = N(6),N(6),N(6)-trimethyl-L-lysyl(4)-[histone H3] + 3 S-adenosyl-L-homocysteine + 3 H(+). The enzyme catalyses N(6)-methyl-L-lysyl(4)-[histone H3] + S-adenosyl-L-methionine = N(6),N(6)-dimethyl-L-lysyl(4)-[histone H3] + S-adenosyl-L-homocysteine + H(+). It catalyses the reaction N(6),N(6)-dimethyl-L-lysyl(4)-[histone H3] + S-adenosyl-L-methionine = N(6),N(6),N(6)-trimethyl-L-lysyl(4)-[histone H3] + S-adenosyl-L-homocysteine + H(+). In terms of biological role, catalytic component of the COMPASS (Set1C) complex that specifically mono-, di- and trimethylates histone H3 to form H3K4me1/2/3. Binds RNA which might negatively affect its histone methyltransferase activity. COMPASS recognizes ubiquitinated H2B on one face of the nucleosome which stimulates the methylation of H3 on the opposing face. Methylation promotes maintenance of active chromatin states at euchromatic chromosomal domains and is present throughout the cell cycle. Plays a role in telomere maintenance and DNA repair in an ATM kinase rad3-dependent pathway. Required for efficient telomeric and centromeric silencing. The sequence is that of Histone-lysine N-methyltransferase, H3 lysine-4 specific from Schizosaccharomyces pombe (strain 972 / ATCC 24843) (Fission yeast).